Consider the following 276-residue polypeptide: Large ribosomal subunit protein uL2 (276 aa).

Disordered regions lie at residues 36–55 (PLPR…RHRG) and 219–276 (TVRG…GRKK). The span at 255-276 (LGKKTRKKKNRSNKLIVRGRKK) shows a compositional bias: basic residues.

This sequence belongs to the universal ribosomal protein uL2 family. As to quaternary structure, part of the 50S ribosomal subunit. Forms a bridge to the 30S subunit in the 70S ribosome.

Functionally, one of the primary rRNA binding proteins. Required for association of the 30S and 50S subunits to form the 70S ribosome, for tRNA binding and peptide bond formation. It has been suggested to have peptidyltransferase activity; this is somewhat controversial. Makes several contacts with the 16S rRNA in the 70S ribosome. This chain is Large ribosomal subunit protein uL2, found in Macrococcus caseolyticus (strain JCSC5402) (Macrococcoides caseolyticum).